Here is a 717-residue protein sequence, read N- to C-terminus: Polyribonucleotide nucleotidyltransferase (717 aa).

Mg(2+) is bound by residues Asp-486 and Asp-492. The region spanning 553-612 (PKIVQLQIDIDKISLVIGSTGKTVKAITDEFEVRVQIEQDGRITLFGTDNLKMQKAKAKI) is the KH domain. An S1 motif domain is found at 622–715 (GEIYDGIVKK…KFGKIELELA (94 aa)). The disordered stretch occupies residues 650–681 (SNRSRSRDDRYGSDIRHSRYSNRNSRYGRDNR). Residues 654-666 (RSRDDRYGSDIRH) are compositionally biased toward basic and acidic residues.

This sequence belongs to the polyribonucleotide nucleotidyltransferase family. It depends on Mg(2+) as a cofactor.

The protein resides in the cytoplasm. It carries out the reaction RNA(n+1) + phosphate = RNA(n) + a ribonucleoside 5'-diphosphate. Functionally, involved in mRNA degradation. Catalyzes the phosphorolysis of single-stranded polyribonucleotides processively in the 3'- to 5'-direction. This Borrelia duttonii (strain Ly) protein is Polyribonucleotide nucleotidyltransferase.